A 973-amino-acid polypeptide reads, in one-letter code: 109 kDa U5 small nuclear ribonucleoprotein component GFL (973 aa).

A disordered region spans residues 1 to 40; that stretch reads MDGSLYGECGNYIGPEIESDRDSDDSVEDEDLQEPGGSNG. A compositionally biased stretch (acidic residues) spans 17–33; sequence IESDRDSDDSVEDEDLQ. The tr-type G domain maps to 122–408; it reads ALVRNVALVG…LGVTLSNSAY (287 aa). A G1 region spans residues 131–138; that stretch reads GHLQHGKT. Residue 131 to 138 participates in GTP binding; the sequence is GHLQHGKT. A G2 region spans residues 175–179; sequence NISIK. The segment at 201–204 is G3; it reads DTPG. GTP is bound by residues 201–205 and 255–258; these read DTPGN and NKVD. A G4 region spans residues 255–258; the sequence is NKVD. The interval 381-383 is G5; sequence YSQ.

Belongs to the TRAFAC class translation factor GTPase superfamily. Classic translation factor GTPase family. As to expression, expressed in flower buds, open flowers and siliques. Expressed at low levels in rosettes leaves, cauline leaves and stems.

It is found in the nucleus speckle. Functionally, splicing factor involved in pre-mRNA splicing and component of the spliceosome. The chain is 109 kDa U5 small nuclear ribonucleoprotein component GFL from Arabidopsis thaliana (Mouse-ear cress).